The primary structure comprises 436 residues: GTPase Der (436 aa).

2 consecutive EngA-type G domains span residues 4-167 (PIVA…DEET) and 176-351 (IRLS…ENHK). GTP-binding positions include 10-17 (GRPNVGKS), 57-61 (DTGGI), 119-122 (NKVD), 182-189 (GRPNVGKS), 229-233 (DTAGM), and 294-297 (NKWD). In terms of domain architecture, KH-like spans 352–436 (KRVQSSTLNE…PIHIIPRRRN (85 aa)).

This sequence belongs to the TRAFAC class TrmE-Era-EngA-EngB-Septin-like GTPase superfamily. EngA (Der) GTPase family. Associates with the 50S ribosomal subunit.

Functionally, GTPase that plays an essential role in the late steps of ribosome biogenesis. The chain is GTPase Der from Staphylococcus haemolyticus (strain JCSC1435).